Consider the following 973-residue polypeptide: Piwi-like protein 2 (973 aa).

Positions Trp-28 to Gln-65 are disordered. Residues Pro-34–Gly-48 show a composition bias toward low complexity. Position 47 is a symmetric dimethylarginine (Arg-47). An omega-N-methylarginine; by PRMT5; alternate mark is found at Arg-76 and Arg-97. Arg-76 bears the Symmetric dimethylarginine; by PRMT5; alternate mark. At Arg-97 the chain carries Symmetric dimethylarginine; alternate. Residue Arg-102 is modified to Symmetric dimethylarginine; by PRMT5; alternate. An Omega-N-methylarginine; alternate modification is found at Arg-102. A symmetric dimethylarginine mark is found at Arg-146 and Arg-158. The tract at residues Gly-162–Asp-199 is disordered. The residue at position 165 (Arg-165) is a Symmetric dimethylarginine; by PRMT5. In terms of domain architecture, PAZ spans Cys-389–Gly-502. Arg-551 carries the symmetric dimethylarginine; by PRMT5 modification. The 292-residue stretch at Met-668–His-959 folds into the Piwi domain. Catalysis depends on residues Asp-745, Glu-783, Asp-815, and His-948.

Belongs to the argonaute family. Piwi subfamily. As to quaternary structure, interacts with DDX4, MAEL, EIF3A, EIF4E, EIF4G, PRMT5 and WDR77. Associates with EIF4E- and EIF4G-containing m7G cap-binding complexes. Interacts (when methylated on arginine residues) with TDRD1 and TDRKH/TDRD2. Interacts with TDRD12. Component of the PET complex, at least composed of EXD1, PIWIL2, TDRD12 and piRNAs. Interacts with MOV10L1. Interacts with GPAT2. Interacts with TEX19. Interacts with GSK3B. Interacts (via PIWI domain) with BMAL1 and CLOCK. Interacts with TEX15. The cofactor is Mg(2+). Arginine methylation by PRMT5 is required for the interaction with Tudor domain-containing protein TDRD1 and subsequent localization to the meiotic nuage, also named P granule. Expressed in adult testis and in most tumors.

The protein resides in the cytoplasm. Endoribonuclease that plays a central role during spermatogenesis by repressing transposable elements and preventing their mobilization, which is essential for the germline integrity. Plays an essential role in meiotic differentiation of spermatocytes, germ cell differentiation and in self-renewal of spermatogonial stem cells. Acts via the piRNA metabolic process, which mediates the repression of transposable elements during meiosis by forming complexes composed of piRNAs and Piwi proteins and govern the methylation and subsequent repression of transposons. During piRNA biosynthesis, plays a key role in the piRNA amplification loop, also named ping-pong amplification cycle, by acting as a 'slicer-competent' piRNA endoribonuclease that cleaves primary piRNAs, which are then loaded onto 'slicer-incompetent' PIWIL4. PIWIL2 slicing produces a pre-miRNA intermediate, which is then processed in mature piRNAs, and as well as a 16 nucleotide by-product that is degraded. Required for PIWIL4/MIWI2 nuclear localization and association with secondary piRNAs antisense. Besides their function in transposable elements repression, piRNAs are probably involved in other processes during meiosis such as translation regulation. Indirectly modulates expression of genes such as PDGFRB, SLC2A1, ITGA6, GJA7, THY1, CD9 and STRA8. When overexpressed, acts as an oncogene by inhibition of apoptosis and promotion of proliferation in tumors. Represses circadian rhythms by promoting the stability and activity of core clock components BMAL1 and CLOCK by inhibiting GSK3B-mediated phosphorylation and ubiquitination-dependent degradation of these proteins. The polypeptide is Piwi-like protein 2 (PIWIL2) (Homo sapiens (Human)).